A 96-amino-acid chain; its full sequence is NADH-ubiquinone oxidoreductase chain 4L (96 aa).

Helical transmembrane passes span 2–22 (IMFL…FCFV), 28–48 (LLSM…MLFI), and 62–82 (MFLT…VSMI).

Belongs to the complex I subunit 4L family.

It localises to the mitochondrion membrane. It carries out the reaction a ubiquinone + NADH + 5 H(+)(in) = a ubiquinol + NAD(+) + 4 H(+)(out). Core subunit of the mitochondrial membrane respiratory chain NADH dehydrogenase (Complex I) that is believed to belong to the minimal assembly required for catalysis. Complex I functions in the transfer of electrons from NADH to the respiratory chain. The immediate electron acceptor for the enzyme is believed to be ubiquinone. In Drosophila nasuta F (Fruit fly), this protein is NADH-ubiquinone oxidoreductase chain 4L (mt:ND4L).